The following is a 528-amino-acid chain: 4-chlorobenzoate--CoA ligase (528 aa).

ATP-binding positions include 161–169, 300–305, and Asn409; these read TSGTTGLPK and NIYGTT.

This sequence belongs to the ATP-dependent AMP-binding enzyme family. As to quaternary structure, homodimer. Mg(2+) is required as a cofactor.

The enzyme catalyses 4-chlorobenzoate + ATP + CoA = 4-chlorobenzoyl-CoA + AMP + diphosphate. Its pathway is xenobiotic degradation; 4-chlorobenzoate degradation; 4-hydroxybenzoate from 4-chlorobenzoate: step 2/3. With respect to regulation, unaffected by 5,5'-dithiobis-(2-nitrobenzoic acid), 4-chloromercuribenzoate and sodium azide. Inhibited by Cu(2+), Fe(2+) and Zn(2+). Unaffected by Na(+), K(+) and Li(+). In terms of biological role, catalyzes the formation of chlorobenzoyl-CoA via a 2 step reaction. First 4-chlorobenzoyl is adenylated by ATP, followed by acyl transfer from the 4-chlorobenzoyl-AMP intermediate to CoA. Benzoate, 4-bromobenzoate, 4-iodobenzoate and 4-methylbenzoate also act as substrates. Inactive towards 4-aminobenzoate, 4-hydroxybenzoate, 2-aminobenzoate, 2,3-dihydroxybenzoate, 4-coumarate and the aliphatic carboxylic acids palmate, caproate, laurate and butyrate. Negligible activity is detected when ATP is replaced by UTP, CTP or GTP as cosubstrate. The sequence is that of 4-chlorobenzoate--CoA ligase from Pseudomonas sp. (strain CBS-3).